A 75-amino-acid polypeptide reads, in one-letter code: Probable pilin MJ1469 (75 aa).

Residues 1-11 constitute a propeptide that is removed on maturation; it reads MKPKKIISNKA. The QXSXEXXXL signature appears at 12 to 20; that stretch reads QISLELALL.

The N-terminus is cleaved by the prepilin peptidase EppA, which recognizes the class III signal sequence.

The protein localises to the secreted. It is found in the cell surface. Its subcellular location is the fimbrium. The sequence is that of Probable pilin MJ1469 from Methanocaldococcus jannaschii (strain ATCC 43067 / DSM 2661 / JAL-1 / JCM 10045 / NBRC 100440) (Methanococcus jannaschii).